A 286-amino-acid chain; its full sequence is Bifunctional protein FolD (286 aa).

NADP(+)-binding positions include 166 to 168 and Ile-232; that span reads GAS.

The protein belongs to the tetrahydrofolate dehydrogenase/cyclohydrolase family. Homodimer.

The enzyme catalyses (6R)-5,10-methylene-5,6,7,8-tetrahydrofolate + NADP(+) = (6R)-5,10-methenyltetrahydrofolate + NADPH. It carries out the reaction (6R)-5,10-methenyltetrahydrofolate + H2O = (6R)-10-formyltetrahydrofolate + H(+). It participates in one-carbon metabolism; tetrahydrofolate interconversion. Catalyzes the oxidation of 5,10-methylenetetrahydrofolate to 5,10-methenyltetrahydrofolate and then the hydrolysis of 5,10-methenyltetrahydrofolate to 10-formyltetrahydrofolate. This Shewanella piezotolerans (strain WP3 / JCM 13877) protein is Bifunctional protein FolD.